A 274-amino-acid polypeptide reads, in one-letter code: Diaminopimelate epimerase (274 aa).

Residues asparagine 11, glutamine 44, and asparagine 64 each contribute to the substrate site. Catalysis depends on cysteine 73, which acts as the Proton donor. Substrate is bound by residues 74–75 (GN), asparagine 157, asparagine 190, and 208–209 (ER). The active-site Proton acceptor is cysteine 217. Position 218 to 219 (218 to 219 (GS)) interacts with substrate.

The protein belongs to the diaminopimelate epimerase family. As to quaternary structure, homodimer.

It is found in the cytoplasm. The enzyme catalyses (2S,6S)-2,6-diaminopimelate = meso-2,6-diaminopimelate. It functions in the pathway amino-acid biosynthesis; L-lysine biosynthesis via DAP pathway; DL-2,6-diaminopimelate from LL-2,6-diaminopimelate: step 1/1. Its function is as follows. Catalyzes the stereoinversion of LL-2,6-diaminopimelate (L,L-DAP) to meso-diaminopimelate (meso-DAP), a precursor of L-lysine and an essential component of the bacterial peptidoglycan. The chain is Diaminopimelate epimerase from Photorhabdus laumondii subsp. laumondii (strain DSM 15139 / CIP 105565 / TT01) (Photorhabdus luminescens subsp. laumondii).